The sequence spans 197 residues: Molybdenum cofactor guanylyltransferase (197 aa).

GTP contacts are provided by residues 10–12, Lys-23, Asn-51, Asp-69, and Asp-99; that span reads LAG. Asp-99 lines the Mg(2+) pocket.

Belongs to the MobA family. As to quaternary structure, monomer. Mg(2+) is required as a cofactor.

The protein resides in the cytoplasm. The enzyme catalyses Mo-molybdopterin + GTP + H(+) = Mo-molybdopterin guanine dinucleotide + diphosphate. Functionally, transfers a GMP moiety from GTP to Mo-molybdopterin (Mo-MPT) cofactor (Moco or molybdenum cofactor) to form Mo-molybdopterin guanine dinucleotide (Mo-MGD) cofactor. The polypeptide is Molybdenum cofactor guanylyltransferase (Shewanella sp. (strain ANA-3)).